The sequence spans 88 residues: Large ribosomal subunit protein bL27 (88 aa).

The disordered stretch occupies residues Met-1 to Arg-20.

This sequence belongs to the bacterial ribosomal protein bL27 family.

The sequence is that of Large ribosomal subunit protein bL27 (rpmA) from Geobacillus stearothermophilus (Bacillus stearothermophilus).